The chain runs to 978 residues: MGTRLPLVLRQLRRPPQPPGPPRRLRVPCRASSGGGGGGGGGREGLLGQRRPQDGQARSSCSPGGRTPAARDSIVREVIQNSKEVLSLLQEKNPAFKPVLAIIQAGDDNLMQEINQNLAEEAGLNITHICLPPDSSEAEIIDEILKINEDTRVHGLALQISENLFSNKVLNALKPEKDVDGVTDINLGKLVRGDAHECFVSPVAKAVIELLEKSGVNLDGKKILVVGAHGSLEAALQCLFQRKGSMTMSIQWKTRQLQSKLHEADIVVLGSPKPEEIPLTWIQPGTTVLNCSHDFLSGKVGCGSPRIHFGGLIEEDDVILLAAALRIQNMVSSGRRWLREQQHRRWRLHCLKLQPLSPVPSDIEISRGQTPKAVDVLAKEIGLLADEIEIYGKSKAKVRLSVLERLKDQADGKYVLVAGITPTPLGEGKSTVTIGLVQALTAHLNVNSFACLRQPSQGPTFGVKGGAAGGGYAQVIPMEEFNLHLTGDIHAITAANNLLAAAIDTRILHENTQTDKALYNRLVPLVNGVREFSEIQLARLKKLGINKTDPSTLTEEEVSKFARLDIDPSTITWQRVLDTNDRFLRKITIGQGNTEKGHYRQAQFDIAVASEIMAVLALTDSLADMKARLGRMVVASDKSGQPVTADDLGVTGALTVLMKDAIKPNLMQTLEGTPVFVHAGPFANIAHGNSSVLADKIALKLVGEEGFVVTEAGFGADIGMEKFFNIKCRASGLVPNVVVLVATVRALKMHGGGPSVTAGVPLKKEYTEENIQLVADGCCNLQKQIQITQLFGVPVVVALNVFKTDTRAEIDLVCELAKRAGAFDAVPCYHWSVGGKGSVDLARAVREAASKRSRFQFLYDVQVPIVDKIRTIAQAVYGAKDIELSPEAQAKIDRYTQQGFGNLPICMAKTHLSLSHQPDKKGVPRDFILPISDVRASIGAGFIYPLVGTMSTMPGLPTRPCFYDIDLDTETEQVKGLF.

Over residues 1–10 the composition is skewed to low complexity; it reads MGTRLPLVLR. The transit peptide at 1 to 31 directs the protein to the mitochondrion; it reads MGTRLPLVLRQLRRPPQPPGPPRRLRVPCRA. The segment at 1 to 71 is disordered; sequence MGTRLPLVLR…SPGGRTPAAR (71 aa). A methylenetetrahydrofolate dehydrogenase and cyclohydrolase region spans residues 31 to 348; sequence ASSGGGGGGG…REQQHRRWRL (318 aa). A compositionally biased stretch (gly residues) spans 33–45; that stretch reads SGGGGGGGGGREG. At Lys189 the chain carries N6-acetyllysine; alternate. Lys189 is subject to N6-succinyllysine; alternate. The interval 349–978 is formyltetrahydrofolate synthetase; it reads HCLKLQPLSP…TETEQVKGLF (630 aa). Ser357 carries the post-translational modification Phosphoserine. 423–430 is a binding site for ATP; that stretch reads TPLGEGKS. Residue Lys596 is modified to N6-succinyllysine.

The protein in the N-terminal section; belongs to the tetrahydrofolate dehydrogenase/cyclohydrolase family. In the C-terminal section; belongs to the formate--tetrahydrofolate ligase family. Homodimer. As to expression, detected in most tissues, highest expression found in placenta, thymus and brain. Low expression is found in liver and skeletal muscle. Up-regulated in colon adenocarcinoma.

It is found in the mitochondrion. The enzyme catalyses (6S)-5,6,7,8-tetrahydrofolate + formate + ATP = (6R)-10-formyltetrahydrofolate + ADP + phosphate. It functions in the pathway one-carbon metabolism; tetrahydrofolate interconversion. Its function is as follows. May provide the missing metabolic reaction required to link the mitochondria and the cytoplasm in the mammalian model of one-carbon folate metabolism complementing thus the enzymatic activities of MTHFD2. The sequence is that of Monofunctional C1-tetrahydrofolate synthase, mitochondrial from Homo sapiens (Human).